The following is a 160-amino-acid chain: MKNFEIVTVTPDHAEQLISMIHELAEFEKMKSSVVNTAEKLRKDIENKAVHGFIAFIGEEPAGMNLFYYAYSTWVGQYLHMEDLYIRPQFRRMGLARTLWKKLAELARDKGIVRLEWAVLDWNKNAIALYDTVDYVNLTKSEGWFTFRMDGAAINKFADE.

The 156-residue stretch at Phe-4–Asp-159 folds into the N-acetyltransferase domain. Acetyl-CoA is bound by residues Leu-84–Ile-86, Arg-92–Arg-97, Asn-123–Ala-126, and Tyr-130–Val-133.

It belongs to the acetyltransferase family. As to quaternary structure, homodimer.

The catalysed reaction is S-(2-aminoethyl)-L-cysteine + acetyl-CoA = S-(2-acetamidoethyl)-L-cysteine + CoA + H(+). It carries out the reaction O-(2-aminoethyl)-L-serine + acetyl-CoA = O-(2-acetamidoethyl)-L-serine + CoA + H(+). It catalyses the reaction S-(2-aminoethyl)-homocysteine + acetyl-CoA = S-(2-acetamidoethyl)-homocysteine + CoA + H(+). Catalyzes the N-acetylation of the amino acid thialysine (S-(2-aminoethyl)-L-cysteine), a L-lysine analog with the 4-methylene group substituted with a sulfur. Substrate specificity: thialysine &gt; O-(2-aminoethyl)-L-serine &gt; S-(2-aminoethyl)-D,L-homocysteine. Does not act on polyamines, such as spermidine and spermine, nor on diamines putrescine and cadaverine. The sequence is that of Thialysine N-epsilon-acetyltransferase from Caenorhabditis elegans.